The chain runs to 235 residues: Hydroxyacylglutathione hydrolase (235 aa).

H53, H55, D57, H58, H109, D127, and H165 together coordinate Zn(2+).

The protein belongs to the metallo-beta-lactamase superfamily. Glyoxalase II family. Monomer. The cofactor is Zn(2+).

The catalysed reaction is an S-(2-hydroxyacyl)glutathione + H2O = a 2-hydroxy carboxylate + glutathione + H(+). It participates in secondary metabolite metabolism; methylglyoxal degradation; (R)-lactate from methylglyoxal: step 2/2. Its function is as follows. Thiolesterase that catalyzes the hydrolysis of S-D-lactoyl-glutathione to form glutathione and D-lactic acid. The chain is Hydroxyacylglutathione hydrolase from Haemophilus ducreyi (strain 35000HP / ATCC 700724).